The sequence spans 893 residues: Probable ion channel CASTOR (893 aa).

The segment at 1-94 (MPLDPDSSPA…APRRRDPRYA (94 aa)) is disordered. Positions 65–85 (PLPPPEQQKQQQPPPTTPPPA) are enriched in pro residues. Residues 132–152 (TLRWSGMVSVAAIVLCFSSLV) traverse the membrane as a helical segment. The stretch at 156 to 178 (SSLHDQVHHLKAQLAEATTKLQS) forms a coiled coil. 3 helical membrane-spanning segments follow: residues 210–230 (LLLSLSTLYAPLLILKYMDLF), 266–286 (LVLLVATLLLIGLGGLALYGV), and 318–338 (LVSVSISIGGMLVFAMMLGLV). 2 RCK N-terminal domains span residues 359–500 (QSHT…ETVV) and 619–792 (PERI…DYVL). Positions 389–415 (TIVVMAEKDKEEMEADIAKMEFDLKGT) form a coiled coil.

The protein belongs to the castor/pollux (TC 1.A.1.23) family. As to expression, expressed in roots, leaves, stems and panicles.

It is found in the nucleus membrane. In terms of biological role, required for mycorrhizal symbiosis. This is Probable ion channel CASTOR from Oryza sativa subsp. japonica (Rice).